Here is a 173-residue protein sequence, read N- to C-terminus: 3-hydroxydecanoyl-[acyl-carrier-protein] dehydratase (173 aa).

The active site involves histidine 71.

The protein belongs to the thioester dehydratase family. FabA subfamily. In terms of assembly, homodimer.

The protein localises to the cytoplasm. The enzyme catalyses a (3R)-hydroxyacyl-[ACP] = a (2E)-enoyl-[ACP] + H2O. It carries out the reaction (3R)-hydroxydecanoyl-[ACP] = (2E)-decenoyl-[ACP] + H2O. The catalysed reaction is (2E)-decenoyl-[ACP] = (3Z)-decenoyl-[ACP]. The protein operates within lipid metabolism; fatty acid biosynthesis. Its function is as follows. Necessary for the introduction of cis unsaturation into fatty acids. Catalyzes the dehydration of (3R)-3-hydroxydecanoyl-ACP to E-(2)-decenoyl-ACP and then its isomerization to Z-(3)-decenoyl-ACP. Can catalyze the dehydratase reaction for beta-hydroxyacyl-ACPs with saturated chain lengths up to 16:0, being most active on intermediate chain length. The protein is 3-hydroxydecanoyl-[acyl-carrier-protein] dehydratase of Bradyrhizobium sp. (strain ORS 278).